The sequence spans 194 residues: Orotate phosphoribosyltransferase (194 aa).

Residues R102, K103, K106, H108, and 129-137 (EDVVTTGGS) each bind 5-phospho-alpha-D-ribose 1-diphosphate. Orotate contacts are provided by T133 and R161.

Belongs to the purine/pyrimidine phosphoribosyltransferase family. PyrE subfamily. In terms of assembly, homodimer. Mg(2+) is required as a cofactor.

The enzyme catalyses orotidine 5'-phosphate + diphosphate = orotate + 5-phospho-alpha-D-ribose 1-diphosphate. It functions in the pathway pyrimidine metabolism; UMP biosynthesis via de novo pathway; UMP from orotate: step 1/2. Its function is as follows. Catalyzes the transfer of a ribosyl phosphate group from 5-phosphoribose 1-diphosphate to orotate, leading to the formation of orotidine monophosphate (OMP). The polypeptide is Orotate phosphoribosyltransferase (Prochlorococcus marinus (strain MIT 9211)).